Reading from the N-terminus, the 101-residue chain is Urease subunit beta (101 aa).

Belongs to the urease beta subunit family. Heterotrimer of UreA (gamma), UreB (beta) and UreC (alpha) subunits. Three heterotrimers associate to form the active enzyme.

It localises to the cytoplasm. The enzyme catalyses urea + 2 H2O + H(+) = hydrogencarbonate + 2 NH4(+). It functions in the pathway nitrogen metabolism; urea degradation; CO(2) and NH(3) from urea (urease route): step 1/1. This Burkholderia multivorans (strain ATCC 17616 / 249) protein is Urease subunit beta.